The chain runs to 405 residues: 3-isopropylmalate dehydrogenase (405 aa).

Residue 86–104 (GAANTVWTTPDGRTDVRPE) participates in NAD(+) binding. Residues R111, R121, R148, and D237 each contribute to the substrate site. Residues D237, D262, and D266 each contribute to the Mg(2+) site. An NAD(+)-binding site is contributed by 301-312 (GSAPDLGKQKVN). The segment at 352–371 (ADIGGSSSTSEVGDLLPTRS) is disordered.

Belongs to the isocitrate and isopropylmalate dehydrogenases family. In terms of assembly, homodimer. Requires Mg(2+) as cofactor. Mn(2+) is required as a cofactor.

It is found in the cytoplasm. The enzyme catalyses (2R,3S)-3-isopropylmalate + NAD(+) = 4-methyl-2-oxopentanoate + CO2 + NADH. It functions in the pathway amino-acid biosynthesis; L-leucine biosynthesis; L-leucine from 3-methyl-2-oxobutanoate: step 3/4. Its function is as follows. Catalyzes the oxidation of 3-carboxy-2-hydroxy-4-methylpentanoate (3-isopropylmalate) to 3-carboxy-4-methyl-2-oxopentanoate. The product decarboxylates to 4-methyl-2 oxopentanoate. The protein is 3-isopropylmalate dehydrogenase (LEU2) of Yarrowia lipolytica (strain CLIB 122 / E 150) (Yeast).